The following is a 393-amino-acid chain: Potassium channel subfamily K member 4 (393 aa).

Residues 1 to 3 are Cytoplasmic-facing; it reads MRS. Residues 4–24 form a helical membrane-spanning segment; the sequence is TTLLALLALVLLYLVSGALVF. Residues 25 to 87 are Extracellular-facing; the sequence is RALEQPHEQQ…NSTSNSSHSA (63 aa). N-linked (GlcNAc...) asparagine glycans are attached at residues N78 and N82. An intramembrane region (helical) is located at residues 88–102; that stretch reads WDLGSAFFFSGTIIT. Residues T103, I104, G105, and Y106 each coordinate K(+). Residues 103 to 108 form a selectivity filter 1 region; the sequence is TIGYGN. An intramembrane segment occupies 103–109; sequence TIGYGNV. The Extracellular segment spans residues 110–117; the sequence is ALRTDAGR. The chain crosses the membrane as a helical span at residues 118–150; it reads LFCIFYALVGIPLFGILLAGVGDRLGSSLRHGI. Residues 151 to 172 are Cytoplasmic-facing; sequence GHIEAIFLKWHVPPELVRVLSA. Residues 173–194 traverse the membrane as a helical segment; it reads MLFLLIGCLLFVLTPTFVFCYM. Residues 195–199 are Extracellular-facing; it reads EDWSK. An intramembrane region (helical) is located at residues 200 to 213; the sequence is LEAIYFVIVTLTTV. K(+) contacts are provided by T212, V213, G214, and F215. Residues 212-217 form a selectivity filter 2 region; sequence TVGFGD. The stretch at 214–219 is an intramembrane region; the sequence is GFGDYV. Over 220-233 the chain is Extracellular; it reads AGADPRQDSPAYQP. A helical transmembrane segment spans residues 234 to 260; it reads LVWFWILLGLAYFASVLTTIGNWLRVV. Residues 261 to 393 are Cytoplasmic-facing; sequence SRRTRAEMGG…GRPRDKGVPV (133 aa). A disordered region spans residues 285 to 393; the sequence is RVTQRAGPAA…GRPRDKGVPV (109 aa). Positions 319–332 are enriched in pro residues; sequence SPSPPEKAQPPSPP. Basic residues predominate over residues 365–384; that stretch reads PRGRRRPNPPRKPVRPRGPG.

This sequence belongs to the two pore domain potassium channel (TC 1.A.1.8) family. In terms of assembly, homodimer; disulfide-linked. Forms heterodimers with other 2-pore domain K(+) channel subunits, such as KCNK2 and KCNK10. N-glycosylated.

It is found in the cell membrane. Its subcellular location is the cell projection. The protein resides in the axon. It catalyses the reaction K(+)(in) = K(+)(out). The enzyme catalyses Rb(+)(in) = Rb(+)(out). It carries out the reaction Cs(+)(in) = Cs(+)(out). Activated by mechanical stretch and arachidonic acid. K(+) channel that conducts voltage-dependent outward rectifying currents upon membrane depolarization. Voltage sensing is coupled to K(+) electrochemical gradient in an 'ion flux gating' mode where outward but not inward ion flow opens the gate. Converts to voltage-independent 'leak' conductance mode upon stimulation by various stimuli including mechanical membrane stretch, basic pH, heat and lipids. Homo- and heterodimerizes to form functional channels with distinct regulatory and gating properties. At trigeminal A-beta afferent nerves, the heterodimer of KCNK2/TREK-1 and KCNK4/TRAAK is mostly coexpressed at nodes of Ranvier where it conducts voltage-independent mechanosensitive and thermosensitive currents, allowing rapid action potential repolarization, high speed and high frequence saltatory conduction on myelinated nerves to ensure prompt sensory responses. Permeable to other monovalent cations such as Rb(+) and Cs(+). This chain is Potassium channel subfamily K member 4, found in Homo sapiens (Human).